Consider the following 272-residue polypeptide: Probable prolyl 4-hydroxylase 11 (272 aa).

The Cytoplasmic portion of the chain corresponds to 1–55 (MSKSTSVSTILYLRQRLQGLKIYETSDLIQHINTFDELVGEQVSVDVKIEEKTKD). A helical; Signal-anchor for type II membrane protein membrane pass occupies residues 56 to 80 (MILLCSLSPLLTTLTCSMVKVAASL). Residues 81–272 (RFPNERWLEV…KRHCLSLNLF (192 aa)) lie on the Lumenal side of the membrane. The Fe2OG dioxygenase domain occupies 179-272 (NGETLQVINY…KRHCLSLNLF (94 aa)). Fe cation-binding residues include His197, Asp199, and His261.

Belongs to the P4HA family. Requires Fe(2+) as cofactor. L-ascorbate is required as a cofactor.

It localises to the endoplasmic reticulum membrane. The catalysed reaction is L-prolyl-[collagen] + 2-oxoglutarate + O2 = trans-4-hydroxy-L-prolyl-[collagen] + succinate + CO2. Catalyzes the post-translational formation of 4-hydroxyproline in -Xaa-Pro-Gly- sequences in proline-rich peptide sequences of plant glycoproteins and other proteins. Hydroxyprolines are important constituent of many plant cell wall glycoproteins such as extensins, hydroxyproline-rich glycoproteins, lectins and arabinogalactan proteins. This chain is Probable prolyl 4-hydroxylase 11, found in Arabidopsis thaliana (Mouse-ear cress).